Consider the following 358-residue polypeptide: Putative ZDHHC-type palmitoyltransferase 4 (358 aa).

4 helical membrane passes run 28–48 (FVGF…TIIF), 57–77 (LFFI…TYGI), 171–191 (YFFL…AHSL), and 210–230 (LLVI…GSFG). The DHHC domain maps to 127-177 (SYCKKCSKAKPPRCHHCSVCDKCVLKMDHHCPWIGGCVGFYNYRYFFLFLS). Asn255 and Asn296 each carry an N-linked (GlcNAc...) asparagine glycan. Residues 302–358 (NNKNNENNENNENNEIDNHNNNNNNNNNNNNNEKEDNINENDNLISYDTDEYNRHKK) form a disordered region. Over residues 305 to 332 (NNENNENNENNEIDNHNNNNNNNNNNNN) the composition is skewed to low complexity.

Belongs to the DHHC palmitoyltransferase family.

It is found in the membrane. It catalyses the reaction L-cysteinyl-[protein] + hexadecanoyl-CoA = S-hexadecanoyl-L-cysteinyl-[protein] + CoA. This Dictyostelium discoideum (Social amoeba) protein is Putative ZDHHC-type palmitoyltransferase 4.